We begin with the raw amino-acid sequence, 339 residues long: Serpentine receptor class alpha-21 (339 aa).

5 helical membrane-spanning segments follow: residues 30–50, 150–170, 199–219, 250–270, and 282–302; these read FNFL…WLAI, FIAV…FYIA, VRTV…YLSV, ILIV…NLLL, and VLVA…PLVI.

This sequence belongs to the nematode receptor-like protein sra family.

The protein resides in the membrane. This is Serpentine receptor class alpha-21 (sra-21) from Caenorhabditis elegans.